The following is a 432-amino-acid chain: D-amino acid dehydrogenase (432 aa).

3 to 17 (VVVLGSGVVGVASAW) is a binding site for FAD.

This sequence belongs to the DadA oxidoreductase family. FAD is required as a cofactor.

It carries out the reaction a D-alpha-amino acid + A + H2O = a 2-oxocarboxylate + AH2 + NH4(+). Its pathway is amino-acid degradation; D-alanine degradation; NH(3) and pyruvate from D-alanine: step 1/1. Functionally, oxidative deamination of D-amino acids. This chain is D-amino acid dehydrogenase, found in Cronobacter sakazakii (strain ATCC BAA-894) (Enterobacter sakazakii).